A 139-amino-acid polypeptide reads, in one-letter code: AP-4 complex subunit sigma (139 aa).

The protein belongs to the adaptor complexes small subunit family. May be part of the adaptor protein complex 4 (AP-4), a heterotetramer composed of two large adaptins (epsilon-type subunitand beta-type subunit), a medium adaptin (mu-type subunit) and a small adaptin (sigma-type).

The protein resides in the golgi apparatus. Its subcellular location is the trans-Golgi network membrane. Functionally, probable component of an adaptor protein complex. Adaptor protein complexes are vesicle coat components involved both in vesicle formation and cargo selection. They control the vesicular transport of proteins in different trafficking pathways. This is AP-4 complex subunit sigma from Dictyostelium discoideum (Social amoeba).